Consider the following 524-residue polypeptide: MILDRDLNLEQFISVVRHGEQVELSAAARERIARARTVIEQIVEGDTPIYGVNTGFGKFENVQIDRSQLAQLQHNLIVSHAIGMGEPLPAEVVRGMLLLRAQSLSLGHSGVRVEVVELLLALLNADALPVVPSQGSVGASGDLAPLAHLALGLIGLGDIEYQGQVRPAADVLAELGLSPVQLQAKEGLALINGTQLMGSLLALALHDAQVLLGTANLAAAMTVEARYGSHRPFQPDVVGLRPHPGALAVAAELREFLAGSEIAPSHLTGDGKVQDAYSLRAVPQVHGATWDALAQAERVLAVEFASVTDNPLIFPETGEVVSGGNFHGQPLAVTIDALKVAVAELGSISERRTEQLLNPALSGLPAFLTPNGGLNSGFMIAQYTSAALVSENKVLSHPASVDSIPTSANQEDHVSMGAHAARQLRQIVANVQTVLSIELLCAAQGLDFQQLRAGRGVQAAYEYVRTFVPTLTEDRYFRPDLLRLRGELVSGELLRVAQAADTQAPAPAKLPDSGDEDRDTTSRH.

The segment at residues 139 to 141 is a cross-link (5-imidazolinone (Ala-Gly)); that stretch reads ASG. Ser140 carries the post-translational modification 2,3-didehydroalanine (Ser). The disordered stretch occupies residues 500–524; sequence ADTQAPAPAKLPDSGDEDRDTTSRH.

This sequence belongs to the PAL/histidase family. Contains an active site 4-methylidene-imidazol-5-one (MIO), which is formed autocatalytically by cyclization and dehydration of residues Ala-Ser-Gly.

It localises to the cytoplasm. It carries out the reaction L-histidine = trans-urocanate + NH4(+). The protein operates within amino-acid degradation; L-histidine degradation into L-glutamate; N-formimidoyl-L-glutamate from L-histidine: step 1/3. This is Histidine ammonia-lyase (hutH) from Deinococcus radiodurans (strain ATCC 13939 / DSM 20539 / JCM 16871 / CCUG 27074 / LMG 4051 / NBRC 15346 / NCIMB 9279 / VKM B-1422 / R1).